A 324-amino-acid polypeptide reads, in one-letter code: MIRSIIRGVGSALPKRSLSNDELAKFVETSDAWIVQRTGIHQRYIANENETTVSLGVKAAQAALINAGLTIKDIDCIILATSTPNRTFPASAVEIQYALGMNHGFAFDIQAVCSGFIFALTTGDSYLRCGAAKRILVIGSDTFSRILDWEDRTTCVLFGDGAGAAVLEAEEIEGGIAFQRGILSAKLRSDGAYIDKLYVDGGPSTTQTTGYLRMEGREVFKYAVGMITDVVDDCFAAAGMDSSQLDWFVPHQANKRIIEASAKKLKISSDKVVITVDKHGNTSAASVPLALTTALCDGRIKRGDLIMLEAMGGGFTWGAILIRW.

Residues C113 and H251 contribute to the active site. Residues Q252–R256 are ACP-binding. Residue N281 is part of the active site.

The protein belongs to the thiolase-like superfamily. FabH family. In terms of assembly, homodimer.

It localises to the cytoplasm. The enzyme catalyses malonyl-[ACP] + acetyl-CoA + H(+) = 3-oxobutanoyl-[ACP] + CO2 + CoA. Its pathway is lipid metabolism; fatty acid biosynthesis. Its function is as follows. Catalyzes the condensation reaction of fatty acid synthesis by the addition to an acyl acceptor of two carbons from malonyl-ACP. Catalyzes the first condensation reaction which initiates fatty acid synthesis and may therefore play a role in governing the total rate of fatty acid production. Possesses both acetoacetyl-ACP synthase and acetyl transacylase activities. Its substrate specificity determines the biosynthesis of branched-chain and/or straight-chain of fatty acids. This chain is Beta-ketoacyl-[acyl-carrier-protein] synthase III, found in Bartonella tribocorum (strain CIP 105476 / IBS 506).